The sequence spans 226 residues: Leucyl/phenylalanyl-tRNA--protein transferase (226 aa).

Belongs to the L/F-transferase family.

The protein resides in the cytoplasm. It catalyses the reaction N-terminal L-lysyl-[protein] + L-leucyl-tRNA(Leu) = N-terminal L-leucyl-L-lysyl-[protein] + tRNA(Leu) + H(+). The catalysed reaction is N-terminal L-arginyl-[protein] + L-leucyl-tRNA(Leu) = N-terminal L-leucyl-L-arginyl-[protein] + tRNA(Leu) + H(+). The enzyme catalyses L-phenylalanyl-tRNA(Phe) + an N-terminal L-alpha-aminoacyl-[protein] = an N-terminal L-phenylalanyl-L-alpha-aminoacyl-[protein] + tRNA(Phe). Functions in the N-end rule pathway of protein degradation where it conjugates Leu, Phe and, less efficiently, Met from aminoacyl-tRNAs to the N-termini of proteins containing an N-terminal arginine or lysine. This Ectopseudomonas mendocina (strain ymp) (Pseudomonas mendocina) protein is Leucyl/phenylalanyl-tRNA--protein transferase.